A 243-amino-acid polypeptide reads, in one-letter code: Carboxy-S-adenosyl-L-methionine synthase (243 aa).

S-adenosyl-L-methionine-binding positions include Tyr-40, 65–67, 90–91, 118–119, Asn-133, and Arg-200; these read GCS, DN, and DI.

The protein belongs to the class I-like SAM-binding methyltransferase superfamily. Cx-SAM synthase family. In terms of assembly, homodimer.

The enzyme catalyses prephenate + S-adenosyl-L-methionine = carboxy-S-adenosyl-L-methionine + 3-phenylpyruvate + H2O. Catalyzes the conversion of S-adenosyl-L-methionine (SAM) to carboxy-S-adenosyl-L-methionine (Cx-SAM). The polypeptide is Carboxy-S-adenosyl-L-methionine synthase (Shewanella sp. (strain W3-18-1)).